A 547-amino-acid polypeptide reads, in one-letter code: Heme-binding protein A (547 aa).

Positions 1–18 are cleaved as a signal peptide; that stretch reads MKLKATLTLAAATLVLAA. Cys19 carries the N-palmitoyl cysteine lipid modification. Cys19 carries S-diacylglycerol cysteine lipidation.

The protein belongs to the bacterial solute-binding protein 5 family.

The protein resides in the cell inner membrane. Its function is as follows. Important role in heme acquisition or metabolism. This is Heme-binding protein A (hbpA) from Haemophilus influenzae (strain ATCC 51907 / DSM 11121 / KW20 / Rd).